Consider the following 455-residue polypeptide: Argininosuccinate lyase (455 aa).

The protein belongs to the lyase 1 family. Argininosuccinate lyase subfamily.

It is found in the cytoplasm. It carries out the reaction 2-(N(omega)-L-arginino)succinate = fumarate + L-arginine. The protein operates within amino-acid biosynthesis; L-arginine biosynthesis; L-arginine from L-ornithine and carbamoyl phosphate: step 3/3. The chain is Argininosuccinate lyase from Shewanella oneidensis (strain ATCC 700550 / JCM 31522 / CIP 106686 / LMG 19005 / NCIMB 14063 / MR-1).